A 446-amino-acid polypeptide reads, in one-letter code: MQESQETHMSSHLDEVIAAVSVTSKNRLSNKLLQTALFQPPREKLHLCEERAKSYSSIREYKQAIQELVRCVALTKICYGDSHWKLAEAYVNLAQGYLQLKGLSLQAKQHAEKAKEILANSMESPYYNKTDIFKCSLELFYTLGKALVSLQKFKEAWENLIKAERLSKEMLQCGNIIKEEWIEIQSRIKLSFAQLYQGQKRSKEAFPYYQKALEYTETTKDEKSFECAQVLREMAGVEQALALHDASIGHFSQAHLIILSKEPSPEDAADSALSIARAAVASGMHDHHDVAEKYFQESMTYLKDSEGTEKAKFLSIQDEFCSFLQTIGQKERAAMILRESLEAKIGVFGDFSPEVAETYRILGRADLAQGNNNGAHMKLKKCVQIETFLYGSQDKKTMATQQTIDTLSKISETPVKSKQSLKAKTAFCTSVPQYVTPGKARHSAAE.

4 TPR repeats span residues 45 to 78 (LHLCEERAKSYSSIREYKQAIQELVRCVALTKIC), 137 to 170 (LELFYTLGKALVSLQKFKEAWENLIKAERLSKEM), 186 to 219 (SRIKLSFAQLYQGQKRSKEAFPYYQKALEYTETT), and 356 to 389 (AETYRILGRADLAQGNNNGAHMKLKKCVQIETFL).

In terms of assembly, associated with the EvC complex composed of EFCAB7, IQCE, EVC2 and EVC.

It is found in the cell projection. It localises to the cilium. Functionally, participates positively in the ciliary Hedgehog (Hh) signaling. The chain is Tetratricopeptide repeat protein 23 (Ttc23) from Rattus norvegicus (Rat).